The primary structure comprises 233 residues: MASHSSTLFTSPSSFILFSSHRLKSSPNYFTYHFPRSVKRPHFDLRCSVSIEKEVPETERPFTFLRVSDGDQTQSSSYSVRARFEKMIRTAQDKVCEAIEAVEEGPKFKEDVWSRPGGGGGISRILQDGNVWEKAGVNVSVIYGVMPPEAYRAAKAATSEQKPGPIPFFAAGTSSVLHPQNPFAPTLHFNYRYFETDAPKDVPGAPRQWWFGGGTDFTPAYIFEEDVKHFHSV.

The N-terminal 48 residues, 1–48 (MASHSSTLFTSPSSFILFSSHRLKSSPNYFTYHFPRSVKRPHFDLRCS), are a transit peptide targeting the chloroplast. Position 174 (Ser-174) interacts with substrate. His-188 acts as the Proton donor in catalysis.

This sequence belongs to the aerobic coproporphyrinogen-III oxidase family. Homodimer.

It localises to the plastid. Its subcellular location is the chloroplast. The catalysed reaction is coproporphyrinogen III + O2 + 2 H(+) = protoporphyrinogen IX + 2 CO2 + 2 H2O. Its pathway is porphyrin-containing compound metabolism; protoporphyrin-IX biosynthesis; protoporphyrinogen-IX from coproporphyrinogen-III (O2 route): step 1/1. It functions in the pathway porphyrin-containing compound metabolism; chlorophyll biosynthesis. In terms of biological role, key enzyme in heme biosynthesis. Catalyzes the oxidative decarboxylation of propionic acid side chains of rings A and B of coproporphyrinogen III. The sequence is that of Coproporphyrinogen-III oxidase 2, chloroplastic (CPX2) from Arabidopsis thaliana (Mouse-ear cress).